The following is a 663-amino-acid chain: Zinc finger protein 44 (663 aa).

The KRAB domain occupies 52–138 (VAFEDVAVNF…GETLSQIRNS (87 aa)). A C2H2-type 1; atypical zinc finger spans residues 189–211 (YTHKQCGKGLSYRHSFQTCERPH). Residues 217-239 (YDCKECGKTFSSPGNLRRHMVVK) form a C2H2-type 2; degenerate zinc finger. 15 consecutive C2H2-type zinc fingers follow at residues 245–267 (YKCE…ERTH), 273–295 (YECK…EKIH), 301–323 (YECK…ERTH), 329–351 (YKCK…ERIH), 357–379 (YTCK…MIMH), 385–407 (HKCK…EGTH), 413–435 (YECK…MMAH), 441–463 (HKCT…ERTH), 469–491 (YECK…ETTH), 497–518 (YKCK…ETTH), 524–546 (YECK…ERTH), 552–574 (YECQ…ERTH), 580–602 (YECK…ERTH), 608–630 (YECK…ERTH), and 636–658 (YECK…KRTH).

It belongs to the krueppel C2H2-type zinc-finger protein family.

The protein localises to the nucleus. May be involved in transcriptional regulation. In Homo sapiens (Human), this protein is Zinc finger protein 44 (ZNF44).